The primary structure comprises 575 residues: Alpha-(1,6)-fucosyltransferase (575 aa).

At 1 to 9 (MRPWTGSWR) the chain is on the cytoplasmic side. A helical; Signal-anchor for type II membrane protein transmembrane segment spans residues 10–30 (WIMLILFAWGTLLFYIGGHLV). The Lumenal portion of the chain corresponds to 31–575 (RDNDHPDHSS…KYPTYPEAEK (545 aa)). 3 disulfides stabilise this stretch: cysteine 204-cysteine 266, cysteine 212-cysteine 230, and cysteine 218-cysteine 222. The 288-residue stretch at 206–493 (KAKKLVCNIN…PDASANFHSL (288 aa)) folds into the GT23 domain. Residue serine 278 is modified to Phosphoserine. The SH3-binding motif lies at 299-305 (PRPPYLP). Residues 365-366 (RR) form an important for donor substrate binding region. Cysteines 465 and 472 form a disulfide. Residues 502–563 (QNAHNQIAIY…PSYKVREKIE (62 aa)) form the SH3 domain.

It belongs to the glycosyltransferase 23 family. In terms of processing, tyrosine phosphorylated by PKDCC/VLK.

It is found in the golgi apparatus. Its subcellular location is the golgi stack membrane. It carries out the reaction N(4)-{beta-D-GlcNAc-(1-&gt;2)-alpha-D-Man-(1-&gt;3)-[beta-D-GlcNAc-(1-&gt;2)-alpha-D-Man-(1-&gt;6)]-beta-D-Man-(1-&gt;4)-beta-D-GlcNAc-(1-&gt;4)-beta-D-GlcNAc}-L-asparaginyl-[protein] + GDP-beta-L-fucose = an N(4)-{beta-D-GlcNAc-(1-&gt;2)-alpha-D-Man-(1-&gt;3)-[beta-D-GlcNAc-(1-&gt;2)-alpha-D-Man-(1-&gt;6)]-beta-D-Man-(1-&gt;4)-beta-D-GlcNAc-(1-&gt;4)-[alpha-L-Fuc-(1-&gt;6)]-beta-D-GlcNAc}-L-asparaginyl-[protein] + GDP + H(+). Its pathway is protein modification; protein glycosylation. In terms of biological role, catalyzes the addition of fucose in alpha 1-6 linkage to the first GlcNAc residue, next to the peptide chains in N-glycans. The sequence is that of Alpha-(1,6)-fucosyltransferase (FUT8) from Homo sapiens (Human).